The primary structure comprises 220 residues: Charged multivesicular body protein 2a (220 aa).

2 coiled-coil regions span residues 12-53 (EELL…MAKQ) and 198-219 (EATA…NLRR). Residues 196 to 220 (KGEATAALADADADLEERLNNLRRD) are disordered. The short motif at 208-218 (ADLEERLNNLR) is the MIT-interacting motif element. A compositionally biased stretch (basic and acidic residues) spans 211-220 (EERLNNLRRD).

The protein belongs to the SNF7 family. Probable core component of the endosomal sorting required for transport complex III (ESCRT-III). ESCRT-III components are thought to multimerize to form a flat lattice on the perimeter membrane of the endosome.

It localises to the late endosome membrane. The protein localises to the cytoplasm. In terms of biological role, probable core component of the endosomal sorting required for transport complex III (ESCRT-III) which is involved in multivesicular bodies (MVBs) formation and sorting of endosomal cargo proteins into MVBs. MVBs contain intraluminal vesicles (ILVs) that are generated by invagination and scission from the limiting membrane of the endosome and mostly are delivered to lysosomes enabling degradation of membrane proteins, such as stimulated growth factor receptors, lysosomal enzymes and lipids. The protein is Charged multivesicular body protein 2a (chmp2a) of Xenopus laevis (African clawed frog).